A 368-amino-acid chain; its full sequence is DNA replication and repair protein RecF (368 aa).

30–37 contributes to the ATP binding site; that stretch reads GDNGAGKT.

It belongs to the RecF family.

The protein localises to the cytoplasm. Its function is as follows. The RecF protein is involved in DNA metabolism; it is required for DNA replication and normal SOS inducibility. RecF binds preferentially to single-stranded, linear DNA. It also seems to bind ATP. This chain is DNA replication and repair protein RecF, found in Xanthomonas campestris pv. campestris (strain 8004).